We begin with the raw amino-acid sequence, 403 residues long: uncharacterized protein (403 aa).

2 helical membrane-spanning segments follow: residues 29 to 49 (FVIFSVLFSLIIGFIASCGFL) and 55 to 75 (AFIASGLCFALLVSVVSFFGC).

Belongs to the chlamydial CPn_0129/CT_036/TC_0306 family.

The protein localises to the cell membrane. This is an uncharacterized protein from Chlamydia trachomatis serovar D (strain ATCC VR-885 / DSM 19411 / UW-3/Cx).